A 329-amino-acid polypeptide reads, in one-letter code: Probable cell division protein WhiA (329 aa).

Positions 275 to 308 form a DNA-binding region, H-T-H motif; sequence SLEELGALADPPLTKDAVAGRIRRLLAMADKRAQ.

This sequence belongs to the WhiA family.

Functionally, involved in cell division and chromosome segregation. This Streptomyces griseus subsp. griseus (strain JCM 4626 / CBS 651.72 / NBRC 13350 / KCC S-0626 / ISP 5235) protein is Probable cell division protein WhiA.